A 110-amino-acid chain; its full sequence is Putative anti-sigma factor antagonist TM_1442 (110 aa).

In terms of domain architecture, STAS spans 4–110 (LKLDIVEQDD…FKITDTVEEA (107 aa)). Ser59 is modified (phosphoserine).

The protein belongs to the anti-sigma-factor antagonist family. In terms of processing, phosphorylated on a serine residue.

Functionally, in the phosphorylated form it could act as an anti-anti-sigma factor that counteracts an anti-sigma factor and thus releases a sigma factor from inhibition. This is Putative anti-sigma factor antagonist TM_1442 from Thermotoga maritima (strain ATCC 43589 / DSM 3109 / JCM 10099 / NBRC 100826 / MSB8).